A 570-amino-acid chain; its full sequence is Putative ABC transporter ATP-binding protein SACOL2708 (570 aa).

2 ABC transporter domains span residues 6 to 247 (ISFK…GIRE) and 304 to 537 (LELN…ASLR). Residues 40-47 (GASGSGKS) and 338-345 (GHNGAGKS) contribute to the ATP site.

It belongs to the ABC transporter superfamily.

The protein resides in the cell membrane. Functionally, probably part of an ABC transporter complex. Responsible for energy coupling to the transport system. The polypeptide is Putative ABC transporter ATP-binding protein SACOL2708 (Staphylococcus aureus (strain COL)).